The sequence spans 163 residues: Neurotrophin-3 (163 aa).

An N-terminal signal peptide occupies residues 1-3 (IQS). Residues 4–119 (TSMDQGILTE…VLNRTSRRKR (116 aa)) constitute a propeptide that is removed on maturation. Asparagine 112 carries an N-linked (GlcNAc...) asparagine glycan. A disordered region spans residues 112 to 132 (NRTSRRKREGKSHRGEYSVCD). Positions 123 to 132 (SHRGEYSVCD) are enriched in basic and acidic residues.

The protein belongs to the NGF-beta family.

The protein localises to the secreted. In terms of biological role, seems to promote the survival of visceral and proprioceptive sensory neurons. The sequence is that of Neurotrophin-3 (NTF3) from Exiliboa placata (Oaxacan dwarf boa).